The following is a 543-amino-acid chain: Probable malate:quinone oxidoreductase (543 aa).

The protein belongs to the MQO family. FAD is required as a cofactor.

It catalyses the reaction (S)-malate + a quinone = a quinol + oxaloacetate. It functions in the pathway carbohydrate metabolism; tricarboxylic acid cycle; oxaloacetate from (S)-malate (quinone route): step 1/1. The protein is Probable malate:quinone oxidoreductase of Acinetobacter baylyi (strain ATCC 33305 / BD413 / ADP1).